A 238-amino-acid polypeptide reads, in one-letter code: LexA repressor (238 aa).

Residues 26-46 constitute a DNA-binding region (H-T-H motif); that stretch reads FDEMKDALDLRSKSGIHRLIT. Active-site for autocatalytic cleavage activity residues include Ser-159 and Lys-197.

Belongs to the peptidase S24 family. As to quaternary structure, homodimer.

The enzyme catalyses Hydrolysis of Ala-|-Gly bond in repressor LexA.. Represses a number of genes involved in the response to DNA damage (SOS response), including recA and lexA. In the presence of single-stranded DNA, RecA interacts with LexA causing an autocatalytic cleavage which disrupts the DNA-binding part of LexA, leading to derepression of the SOS regulon and eventually DNA repair. The sequence is that of LexA repressor from Rhodobacter capsulatus (Rhodopseudomonas capsulata).